We begin with the raw amino-acid sequence, 488 residues long: UDP-N-acetylmuramate--L-alanine ligase (488 aa).

127 to 133 lines the ATP pocket; it reads GTHGKTT.

The protein belongs to the MurCDEF family.

Its subcellular location is the cytoplasm. The enzyme catalyses UDP-N-acetyl-alpha-D-muramate + L-alanine + ATP = UDP-N-acetyl-alpha-D-muramoyl-L-alanine + ADP + phosphate + H(+). The protein operates within cell wall biogenesis; peptidoglycan biosynthesis. In terms of biological role, cell wall formation. The polypeptide is UDP-N-acetylmuramate--L-alanine ligase (Shewanella sp. (strain ANA-3)).